A 151-amino-acid polypeptide reads, in one-letter code: Endoribonuclease YbeY (151 aa).

Zn(2+) is bound by residues His-114, His-118, and His-124.

This sequence belongs to the endoribonuclease YbeY family. The cofactor is Zn(2+).

Its subcellular location is the cytoplasm. Its function is as follows. Single strand-specific metallo-endoribonuclease involved in late-stage 70S ribosome quality control and in maturation of the 3' terminus of the 16S rRNA. The sequence is that of Endoribonuclease YbeY from Hamiltonella defensa subsp. Acyrthosiphon pisum (strain 5AT).